Consider the following 196-residue polypeptide: Cilia- and flagella-associated protein 107 (196 aa).

Mn regions lie at residues 46 to 61 (TPQT…FPGH) and 96 to 108 (ISTY…RHNY). Positions 168–196 (YPRPPAGAMSRREHAIPVPPPRLQPVPHF) are disordered. Over residues 184 to 196 (PVPPPRLQPVPHF) the composition is skewed to pro residues.

As to quaternary structure, microtubule inner protein component of sperm flagellar doublet microtubules. In terms of tissue distribution, expressed in trachea multiciliated cells.

It is found in the cytoplasm. The protein resides in the cytoskeleton. It localises to the cilium axoneme. The protein localises to the flagellum axoneme. In terms of biological role, microtubule inner protein (MIP) part of the dynein-decorated doublet microtubules (DMTs) in cilia axoneme, which is required for motile cilia beating. This chain is Cilia- and flagella-associated protein 107, found in Bos taurus (Bovine).